A 156-amino-acid chain; its full sequence is 6,7-dimethyl-8-ribityllumazine synthase (156 aa).

5-amino-6-(D-ribitylamino)uracil-binding positions include Phe-22, 57–59 (AYE), and 81–83 (TVI). 86–87 (GT) contributes to the (2S)-2-hydroxy-3-oxobutyl phosphate binding site. The active-site Proton donor is the His-89. A 5-amino-6-(D-ribitylamino)uracil-binding site is contributed by Phe-114. Arg-128 provides a ligand contact to (2S)-2-hydroxy-3-oxobutyl phosphate.

It belongs to the DMRL synthase family. As to quaternary structure, forms an icosahedral capsid composed of 60 subunits, arranged as a dodecamer of pentamers.

The enzyme catalyses (2S)-2-hydroxy-3-oxobutyl phosphate + 5-amino-6-(D-ribitylamino)uracil = 6,7-dimethyl-8-(1-D-ribityl)lumazine + phosphate + 2 H2O + H(+). It functions in the pathway cofactor biosynthesis; riboflavin biosynthesis; riboflavin from 2-hydroxy-3-oxobutyl phosphate and 5-amino-6-(D-ribitylamino)uracil: step 1/2. Catalyzes the formation of 6,7-dimethyl-8-ribityllumazine by condensation of 5-amino-6-(D-ribitylamino)uracil with 3,4-dihydroxy-2-butanone 4-phosphate. This is the penultimate step in the biosynthesis of riboflavin. This Serratia proteamaculans (strain 568) protein is 6,7-dimethyl-8-ribityllumazine synthase.